A 572-amino-acid polypeptide reads, in one-letter code: Putative carbohydrate transport ATP-binding protein MPN_258 (572 aa).

ABC transporter domains lie at 6–253 (FRME…MGKE) and 327–572 (RFIR…LIMQ). ATP is bound at residue 40–47 (GENGAGKS).

It belongs to the ABC transporter superfamily.

It localises to the cell membrane. Its function is as follows. Part of the ABC transporter complex involved in carbohydrates import. Probably responsible for energy coupling to the transport system. In Mycoplasma pneumoniae (strain ATCC 29342 / M129 / Subtype 1) (Mycoplasmoides pneumoniae), this protein is Putative carbohydrate transport ATP-binding protein MPN_258.